Here is a 537-residue protein sequence, read N- to C-terminus: Fucosyltransferase 6 (537 aa).

The Cytoplasmic segment spans residues 1-20 (MYHIFQISSEVFRAFGLKMK). The helical; Signal-anchor for type II membrane protein transmembrane segment at 21–41 (ILLTLVFSGLLIWSVVLVSFS) threads the bilayer. The Lumenal portion of the chain corresponds to 42–537 (NDFNNQLLVA…NDGLKLFDEL (496 aa)). N-linked (GlcNAc...) asparagine glycosylation is found at N54, N231, and N378.

Belongs to the glycosyltransferase 37 family. In terms of tissue distribution, expressed in roots and flowers.

The protein localises to the golgi apparatus. Its subcellular location is the golgi stack membrane. It participates in protein modification; protein glycosylation. May be involved in cell wall biosynthesis. May act as a fucosyltransferase. In Arabidopsis thaliana (Mouse-ear cress), this protein is Fucosyltransferase 6 (FUT6).